Consider the following 189-residue polypeptide: Movement protein (189 aa).

It belongs to the tombusvirus/aureusvirus movement protein p22 family. Interacts with host protein HFI22. Phosphorylated.

The protein resides in the host membrane. Transports viral genome to neighboring plant cells directly through plasmosdesmata, without any budding. The movement protein allows efficient cell to cell propagation, by bypassing the host cell wall barrier. This is Movement protein from Tomato bushy stunt virus (strain BS-3) (TBSV).